The following is a 1230-amino-acid chain: Myosin-1 (1230 aa).

The disordered stretch occupies residues 1 to 32 (MGISRRPKADKNASAADSAPGGKPNIQKAQFD). A Myosin motor domain is found at 39-713 (VGVSDLTLIS…TLFALEHMRD (675 aa)). 132 to 139 (GESGAGKT) provides a ligand contact to ATP. An actin-binding region spans residues 403-485 (SIGILDIYGF…PGVFSAMKDA (83 aa)). 2 consecutive IQ domains span residues 717 to 737 (HNMA…RIEA) and 738 to 763 (ATRI…KGHQ). One can recognise a TH1 domain in the interval 771–961 (RRRYSLLGSR…TIHTQAGEPP (191 aa)). Disordered stretches follow at residues 945–1018 (QDHY…AARP), 1033–1065 (TRNT…PVSK), and 1116–1230 (AYLE…EDDW). Positions 1033–1045 (TRNTSVQSTQSTR) are enriched in polar residues. Pro residues-rich tracts occupy residues 1047-1062 (VPPP…PPAP) and 1122-1142 (TPPP…PGPP). Residues 1064-1123 (SKEPQYRVLYEFAGQSANEFSLKQGEIVTVLQKETNGWWLTKNVRGQGWAPTAYLEEVTP) form the SH3 domain. Residues 1179 to 1214 (RDSGMSISSNGSGNNSGRSTPTPSLAGGLAEALRAR) are compositionally biased toward low complexity.

It belongs to the TRAFAC class myosin-kinesin ATPase superfamily. Myosin family.

It is found in the cytoplasm. The protein resides in the cytoskeleton. Its subcellular location is the actin patch. Its function is as follows. Type-I myosin implicated in the organization of the actin cytoskeleton. Required for proper actin cytoskeleton polarization. At the cell cortex, assembles in patch-like structures together with proteins from the actin-polymerizing machinery and promotes actin assembly. Functions as actin nucleation-promoting factor (NPF) for the Arp2/3 complex. The protein is Myosin-1 (myoA) of Sclerotinia sclerotiorum (strain ATCC 18683 / 1980 / Ss-1) (White mold).